The following is a 181-amino-acid chain: CDP-diacylglycerol--glycerol-3-phosphate 3-phosphatidyltransferase (181 aa).

Transmembrane regions (helical) follow at residues 8–28 (PNYL…TFYI), 35–55 (MLGA…GYIA), 64–84 (FGKM…IIML), and 148–168 (IIYL…LTII).

The protein belongs to the CDP-alcohol phosphatidyltransferase class-I family.

The protein resides in the cell membrane. The catalysed reaction is a CDP-1,2-diacyl-sn-glycerol + sn-glycerol 3-phosphate = a 1,2-diacyl-sn-glycero-3-phospho-(1'-sn-glycero-3'-phosphate) + CMP + H(+). The protein operates within phospholipid metabolism; phosphatidylglycerol biosynthesis; phosphatidylglycerol from CDP-diacylglycerol: step 1/2. This protein catalyzes the committed step to the synthesis of the acidic phospholipids. The chain is CDP-diacylglycerol--glycerol-3-phosphate 3-phosphatidyltransferase (pgsA) from Rickettsia bellii (strain RML369-C).